The chain runs to 792 residues: Alpha-1,6-mannosylglycoprotein 6-beta-N-acetylglucosaminyltransferase B (792 aa).

At 1-24 (MITVNPDGKIMVRRCLVTLRPFRL) the chain is on the cytoplasmic side. The helical; Signal-anchor for type II membrane protein transmembrane segment at 25-45 (FVLGIGFFTLCFLMTSLGGQF) threads the bilayer. Residues 46-792 (SARRLGDSPF…GQVALCQGCL (747 aa)) are Lumenal-facing. N-linked (GlcNAc...) asparagine glycosylation occurs at N127. 4 disulfides stabilise this stretch: C157-C195, C168-C208, C184-C353, and C387-C644. N675 is a glycosylation site (N-linked (GlcNAc...) asparagine). 5 disulfides stabilise this stretch: C700–C775, C704–C777, C711–C764, C732–C753, and C788–C791.

The protein belongs to the glycosyltransferase 18 family. Mn(2+) is required as a cofactor. Present in brain (at protein level). Predominantly expressed in hippocampus, superficial layers of the brain cortex, striatum, nucleus accumbens, a subset of nuclei in the thalamus, inferior colliculus, brain stem and cerebellum.

The protein resides in the golgi apparatus membrane. The enzyme catalyses N(4)-{beta-D-GlcNAc-(1-&gt;2)-[beta-D-GlcNAc-(1-&gt;4)]-alpha-D-Man-(1-&gt;3)-[beta-D-GlcNAc-(1-&gt;2)-alpha-D-Man-(1-&gt;6)]-beta-D-Man-(1-&gt;4)-beta-D-GlcNAc-(1-&gt;4)-beta-D-GlcNAc}-L-asparaginyl-[protein] + UDP-N-acetyl-alpha-D-glucosamine = N(4)-{beta-D-GlcNAc-(1-&gt;2)-[beta-D-GlcNAc-(1-&gt;4)]-alpha-D-Man-(1-&gt;3)-[beta-D-GlcNAc-(1-&gt;2)-[beta-D-GlcNAc-(1-&gt;6)]-alpha-D-Man-(1-&gt;6)]-beta-D-Man-(1-&gt;4)-beta-D-GlcNAc-(1-&gt;4)-beta-D-GlcNAc}-L-asparaginyl-[protein] + UDP + H(+). It carries out the reaction 3-O-[N-acetyl-beta-D-glucosaminyl-(1-&gt;2)-alpha-D-mannosyl]-L-seryl-[protein] + UDP-N-acetyl-alpha-D-glucosamine = O(3)-{N-acetyl-beta-D-glucosaminyl-(1-&gt;2)-[N-acetyl-beta-D-glucosaminyl-(1-&gt;6)]-alpha-D-mannosyl}-L-seryl-[protein] + UDP + H(+). It catalyses the reaction 3-O-[N-acetyl-beta-D-glucosaminyl-(1-&gt;2)-alpha-D-mannosyl]-L-threonyl-[protein] + UDP-N-acetyl-alpha-D-glucosamine = O(3)-{N-acetyl-beta-D-glucosaminyl-(1-&gt;2)-[N-acetyl-beta-D-glucosaminyl-(1-&gt;6)]-alpha-D-mannosyl}-L-threonyl-[protein] + UDP + H(+). Its pathway is protein modification; protein glycosylation. In terms of biological role, glycosyltransferase that acts on alpha-linked mannose of N-glycans and O-mannosyl glycans. Catalyzes the transfer of N-acetylglucosamine (GlcNAc) to the beta 1-6 linkage of the mannose residue of GlcNAc-beta1,2-Man-alpha on both the alpha1,3- and alpha1,6-linked mannose arms in the core structure of N-glycan. Also acts on the GlcNAc-beta1,2-Man-alpha1-Ser/Thr moiety, forming a 2,6-branched structure in brain O-mannosyl glycan. Plays an active role in modulating integrin and laminin-dependent adhesion and migration of neuronal cells via its activity in the O-mannosyl glycan pathway. The protein is Alpha-1,6-mannosylglycoprotein 6-beta-N-acetylglucosaminyltransferase B (Mgat5b) of Mus musculus (Mouse).